We begin with the raw amino-acid sequence, 340 residues long: Putative transport protein AF_1800 (340 aa).

Helical transmembrane passes span 7–27 (LVLLLSILVVLALTFYFFTPL), 57–77 (SVIATAIVILPISVLMFYGLI), 140–160 (TLLILNFFISIVVCFYALADM), 193–213 (LWFGNFVVAILIGLVSLPFFL), 225–245 (GLMFLAALIPIFAEWMIILPV), 260–280 (FLLIGVVFLYVLPELILRPYF), and 290–310 (LVLMLAFIGGGLVGGISGFFI).

It belongs to the autoinducer-2 exporter (AI-2E) (TC 2.A.86) family.

The protein localises to the cell membrane. This chain is Putative transport protein AF_1800, found in Archaeoglobus fulgidus (strain ATCC 49558 / DSM 4304 / JCM 9628 / NBRC 100126 / VC-16).